The primary structure comprises 649 residues: DNA mismatch repair protein MutL (649 aa).

Belongs to the DNA mismatch repair MutL/HexB family.

In terms of biological role, this protein is involved in the repair of mismatches in DNA. It is required for dam-dependent methyl-directed DNA mismatch repair. May act as a 'molecular matchmaker', a protein that promotes the formation of a stable complex between two or more DNA-binding proteins in an ATP-dependent manner without itself being part of a final effector complex. The protein is DNA mismatch repair protein MutL of Streptococcus pneumoniae (strain P1031).